The chain runs to 246 residues: 5'-nucleotidase SurE (246 aa).

4 residues coordinate a divalent metal cation: Asp-8, Asp-9, Ser-39, and Asn-91.

This sequence belongs to the SurE nucleotidase family. A divalent metal cation serves as cofactor.

The protein resides in the cytoplasm. It catalyses the reaction a ribonucleoside 5'-phosphate + H2O = a ribonucleoside + phosphate. Functionally, nucleotidase that shows phosphatase activity on nucleoside 5'-monophosphates. This is 5'-nucleotidase SurE from Histophilus somni (strain 129Pt) (Haemophilus somnus).